The sequence spans 94 residues: Co-chaperonin GroES (94 aa).

Belongs to the GroES chaperonin family. In terms of assembly, heptamer of 7 subunits arranged in a ring. Interacts with the chaperonin GroEL.

It localises to the cytoplasm. Together with the chaperonin GroEL, plays an essential role in assisting protein folding. The GroEL-GroES system forms a nano-cage that allows encapsulation of the non-native substrate proteins and provides a physical environment optimized to promote and accelerate protein folding. GroES binds to the apical surface of the GroEL ring, thereby capping the opening of the GroEL channel. This Clostridium perfringens (strain ATCC 13124 / DSM 756 / JCM 1290 / NCIMB 6125 / NCTC 8237 / Type A) protein is Co-chaperonin GroES.